Here is a 615-residue protein sequence, read N- to C-terminus: Increased rDNA silencing protein 4 (615 aa).

Disordered regions lie at residues 38–135 (SNEV…SSHS), 152–260 (LLGI…NRSQ), 277–304 (PSIA…NYSS), and 323–445 (KPKH…NEDK). The segment covering 50-65 (VSRNPQTRLSEPSLQK) has biased composition (polar residues). Composition is skewed to low complexity over residues 121-135 (HSQS…SSHS) and 157-168 (SRSSSRNGSNES). Phosphoserine is present on Ser180. The span at 184–198 (LLTSFSSGRRLSSSS) shows a compositional bias: low complexity. Polar residues predominate over residues 248–260 (NPDTSDVISNRSQ). Over residues 281–290 (SSNTTTTTSN) the composition is skewed to low complexity. Over residues 365-377 (ENDHASSLHEGNL) the composition is skewed to basic and acidic residues. Residues 389–402 (DVYDDTDSDSESDQ) are compositionally biased toward acidic residues. A compositionally biased stretch (basic residues) spans 409-438 (KPRKRDRIKRKIRNSANKTAHHRPIHRTRD). In terms of domain architecture, EH spans 460-571 (ERKRYESMWV…QCVWDSVDRY (112 aa)).

This sequence belongs to the IRS4 family. Interacts with INP51.

Functionally, with TAX4, acts as a positive regulator of INP51 activity and phosphatidylinositol 4,5-bisphosphate turnover. Negatively regulates signaling through the cell integrity pathway, including the MAP kinase SLT2. Also seems to be involved in rDNA silencing. In Saccharomyces cerevisiae (strain YJM789) (Baker's yeast), this protein is Increased rDNA silencing protein 4 (IRS4).